Consider the following 339-residue polypeptide: Nitrilase (339 aa).

The CN hydrolase domain maps to 7-277; it reads YRVAAVQASP…EGITYADIDL (271 aa). The active-site Proton acceptor is the E47. Catalysis depends on K128, which acts as the Proton donor. C162 (nucleophile) is an active-site residue.

This sequence belongs to the carbon-nitrogen hydrolase superfamily. Nitrilase family.

The enzyme catalyses a nitrile + 2 H2O = a carboxylate + NH4(+). This is Nitrilase (nit) from Bacillus sp. (strain OxB-1).